The primary structure comprises 505 residues: Monocarboxylate transporter 10 (505 aa).

A compositionally biased stretch (acidic residues) spans 1-14; sequence MTEPEPTLEQEPTP. The tract at residues 1 to 64 is disordered; it reads MTEPEPTLEQ…EQKSPEEFEP (64 aa). At 1 to 66 the chain is on the cytoplasmic side; that stretch reads MTEPEPTLEQ…KSPEEFEPPE (66 aa). Over residues 15-31 the composition is skewed to pro residues; sequence EPEPTQEPTPEPTPEPE. Over residues 32–41 the composition is skewed to acidic residues; sequence PTQEPESEPE. The helical transmembrane segment at 67–87 threads the bilayer; the sequence is GGWGWVVMLASMWCNGSVFGI. Topologically, residues 88–114 are extracellular; sequence QNAFGIMFVYLLNEFGSEHDADLRFKT. A helical transmembrane segment spans residues 115–135; sequence AWVGSLSMGMIFFCSPIVSVF. Over 136–142 the chain is Cytoplasmic; the sequence is TDLLGCR. Residues 143 to 163 traverse the membrane as a helical segment; the sequence is ITAVGGAAVGCVGLLASSFVT. Over 164 to 171 the chain is Extracellular; that stretch reads SLGPMYFT. Residues 172-192 form a helical membrane-spanning segment; sequence YGIVFACGCSFAYQPSLVILG. Residues 193-204 lie on the Cytoplasmic side of the membrane; that stretch reads HYFKRRLGLVNG. A helical membrane pass occupies residues 205-225; the sequence is IVTAGSSVFTITLPYMLSGLL. Over 226–235 the chain is Extracellular; sequence KSVGLYHTLR. Residues 236 to 256 traverse the membrane as a helical segment; it reads VLAIFMFILMLAGLTYKPLLP. Residues 257–286 lie on the Cytoplasmic side of the membrane; sequence KPVSSSKPGSRCPPLSRIFNVNIWKSLGYR. A helical transmembrane segment spans residues 287–307; the sequence is IWAFGIPAALYGYFVPYVHLM. Residues 308 to 321 lie on the Extracellular side of the membrane; the sequence is THVEERFGPEANKE. A helical membrane pass occupies residues 322–342; sequence VLLACIGITSGVGRLIFGRVA. Residue D343 is a topological domain, cytoplasmic. Residues 344–364 form a helical membrane-spanning segment; sequence YVPGVNKVFLQVSSFMVIGVM. The Extracellular portion of the chain corresponds to 365–377; it reads SMMIPLCHVFGGL. A helical transmembrane segment spans residues 378–400; it reads IAVCLLMGLFDGCFICIMAPIAF. The Cytoplasmic segment spans residues 401 to 411; sequence ELVGSQNVSQA. A helical membrane pass occupies residues 412–432; the sequence is IGFLLGMMSIPMTVGPPIAGF. Over 433 to 443 the chain is Extracellular; the sequence is LRDRLGSYDVA. The helical transmembrane segment at 444-464 threads the bilayer; the sequence is FYLAGIPPLIGGAVLCAIPWV. The Cytoplasmic segment spans residues 465-505; sequence EARRKRREAANTAENTEKMLESRSPPLEDTVCRTEEPESVI. The disordered stretch occupies residues 474-505; sequence ANTAENTEKMLESRSPPLEDTVCRTEEPESVI. Basic and acidic residues predominate over residues 494-505; that stretch reads TVCRTEEPESVI.

Belongs to the major facilitator superfamily. Monocarboxylate porter (TC 2.A.1.13) family.

It is found in the cell membrane. Its subcellular location is the basolateral cell membrane. The enzyme catalyses L-tryptophan(in) = L-tryptophan(out). The catalysed reaction is L-tyrosine(in) = L-tyrosine(out). It catalyses the reaction L-phenylalanine(in) = L-phenylalanine(out). It carries out the reaction 3,3',5-triiodo-L-thyronine(out) = 3,3',5-triiodo-L-thyronine(in). The enzyme catalyses L-thyroxine(out) = L-thyroxine(in). In terms of biological role, sodium- and proton-independent thyroid hormones and aromatic acids transporter. Mediates both uptake and efflux of 3,5,3'-triiodothyronine (T3) and 3,5,3',5'-tetraiodothyronine (T4) with high affinity, suggesting a role in the homeostasis of thyroid hormone levels. Responsible for low affinity bidirectional transport of the aromatic amino acids, such as phenylalanine, tyrosine, tryptophan and L-3,4-dihydroxyphenylalanine (L-dopa). Plays an important role in homeostasis of aromatic amino acids. The sequence is that of Monocarboxylate transporter 10 (slc16a10) from Danio rerio (Zebrafish).